We begin with the raw amino-acid sequence, 148 residues long: NADPH-dependent 7-cyano-7-deazaguanine reductase (148 aa).

Cysteine 50 functions as the Thioimide intermediate in the catalytic mechanism. Aspartate 57 acts as the Proton donor in catalysis. Substrate-binding positions include 72-74 (VES) and 91-92 (HE).

This sequence belongs to the GTP cyclohydrolase I family. QueF type 1 subfamily.

It localises to the cytoplasm. The enzyme catalyses 7-aminomethyl-7-carbaguanine + 2 NADP(+) = 7-cyano-7-deazaguanine + 2 NADPH + 3 H(+). Its pathway is tRNA modification; tRNA-queuosine biosynthesis. Catalyzes the NADPH-dependent reduction of 7-cyano-7-deazaguanine (preQ0) to 7-aminomethyl-7-deazaguanine (preQ1). The polypeptide is NADPH-dependent 7-cyano-7-deazaguanine reductase (Helicobacter acinonychis (strain Sheeba)).